Here is a 296-residue protein sequence, read N- to C-terminus: Cytidine deaminase (296 aa).

CMP/dCMP-type deaminase domains follow at residues 47-167 (TESE…FGPK) and 186-296 (DSSD…VDPI). 88-90 (NLE) serves as a coordination point for substrate. H101 is a Zn(2+) binding site. Catalysis depends on E103, which acts as the Proton donor. Residues C128 and C131 each coordinate Zn(2+).

The protein belongs to the cytidine and deoxycytidylate deaminase family. As to quaternary structure, homodimer. Zn(2+) is required as a cofactor.

It carries out the reaction cytidine + H2O + H(+) = uridine + NH4(+). The enzyme catalyses 2'-deoxycytidine + H2O + H(+) = 2'-deoxyuridine + NH4(+). In terms of biological role, this enzyme scavenges exogenous and endogenous cytidine and 2'-deoxycytidine for UMP synthesis. The protein is Cytidine deaminase of Shewanella oneidensis (strain ATCC 700550 / JCM 31522 / CIP 106686 / LMG 19005 / NCIMB 14063 / MR-1).